A 344-amino-acid chain; its full sequence is tRNA N6-adenosine threonylcarbamoyltransferase (344 aa).

Residues histidine 119 and histidine 123 each contribute to the Fe cation site. Residues 141–145 (VVSGG), aspartate 174, glycine 187, aspartate 191, and asparagine 280 each bind substrate. Aspartate 310 provides a ligand contact to Fe cation.

This sequence belongs to the KAE1 / TsaD family. Fe(2+) is required as a cofactor.

The protein localises to the cytoplasm. It catalyses the reaction L-threonylcarbamoyladenylate + adenosine(37) in tRNA = N(6)-L-threonylcarbamoyladenosine(37) in tRNA + AMP + H(+). Its function is as follows. Required for the formation of a threonylcarbamoyl group on adenosine at position 37 (t(6)A37) in tRNAs that read codons beginning with adenine. Is involved in the transfer of the threonylcarbamoyl moiety of threonylcarbamoyl-AMP (TC-AMP) to the N6 group of A37, together with TsaE and TsaB. TsaD likely plays a direct catalytic role in this reaction. The protein is tRNA N6-adenosine threonylcarbamoyltransferase of Listeria welshimeri serovar 6b (strain ATCC 35897 / DSM 20650 / CCUG 15529 / CIP 8149 / NCTC 11857 / SLCC 5334 / V8).